Here is a 166-residue protein sequence, read N- to C-terminus: Regulatory protein RecX (166 aa).

Belongs to the RecX family.

It localises to the cytoplasm. Its function is as follows. Modulates RecA activity. The sequence is that of Regulatory protein RecX from Escherichia coli (strain SE11).